The chain runs to 369 residues: MAKRIKNTTPKQDGFRMPGEFEKQKQIWMLWPWRNDNWRLGAKPAQKAFLEVAEAISEFEPVSLCVPPLQYENALARVSELGSHNIRIIEMTNDDAWIRDCGPTFLVNDKGDLRAVDWEFNAWGGLVDGLYFPWDQDALVARKVCEIEGVDSYKTKDFVLEGGSIHVDGEGTVLVTEMCLLHPSRNPHLTKEDIEDKLKDYLNCVKVLWVKDGIDPYETNGHIDDVACFIRPGEVACIYTDDKEHPFYQEAKAAYDFLSQQTDAKGRPLKVHKMCVTKEPCYLQEAATIDYVEGSIPREEGEMAIASYLNFLIVNGGIILPQYGDENDQLAKQQVQEMFPDRKVVGVRTEEIAYGGGNIHCITQQQPAT.

Cys361 functions as the Amidino-cysteine intermediate in the catalytic mechanism.

Belongs to the agmatine deiminase family.

It catalyses the reaction agmatine + H2O = N-carbamoylputrescine + NH4(+). In Streptococcus mutans serotype c (strain ATCC 700610 / UA159), this protein is Putative agmatine deiminase.